A 321-amino-acid polypeptide reads, in one-letter code: Olfactory receptor 56B34 (321 aa).

The Extracellular portion of the chain corresponds to 1–36 (MGTALHETNSSEVHVSEFILLGFPGIHEFQIWLSLP). A helical transmembrane segment spans residues 37–57 (MALLYIVALGANLLILITIYL). The Cytoplasmic segment spans residues 58-70 (EPTLHQPMYQFLG). A helical membrane pass occupies residues 71-91 (ILAAVDIGLATTSMPKILAIL). Topologically, residues 92 to 105 (WFDAKTISLPECFA) are extracellular. The cysteines at positions 103 and 185 are disulfide-linked. The chain crosses the membrane as a helical span at residues 106-126 (QIYAIHTFMCMESGVFLCMAI). Residues 127–128 (DR) lie on the Cytoplasmic side of the membrane. Residues 129 to 149 (YVAICYPLQYPSIVTEAFVIK) form a helical membrane-spanning segment. The Extracellular portion of the chain corresponds to 150 to 207 (ATLSMLLRNGLLTIPVPVLAAQRQYCSRNEIDHCLCSNLGVISLACDDITVNRFYQLA). A helical transmembrane segment spans residues 208-228 (LAWLVVGSDMILVYASYALII). Over 229–250 (RSVLRLNSTEAASKALSTCSSH) the chain is Cytoplasmic. The chain crosses the membrane as a helical span at residues 251–271 (LILIMFYYTAIVIVSVTHLAG). The Extracellular portion of the chain corresponds to 272-275 (RRVP). A helical transmembrane segment spans residues 276-296 (LIPVLLNVMHIVIPPSLNPVV). Residues 297 to 321 (YALRTQELKVGFRKVFSLSEFVSRK) lie on the Cytoplasmic side of the membrane.

The protein belongs to the G-protein coupled receptor 1 family.

The protein resides in the cell membrane. Odorant receptor. This is Olfactory receptor 56B34 from Mus musculus (Mouse).